The primary structure comprises 321 residues: tRNA U34 carboxymethyltransferase (321 aa).

Residues Lys-90, Trp-104, Lys-109, Gly-129, Asp-151–Thr-153, Ile-180–Glu-181, Met-195, Tyr-199, and Arg-314 contribute to the carboxy-S-adenosyl-L-methionine site.

Belongs to the class I-like SAM-binding methyltransferase superfamily. CmoB family. As to quaternary structure, homotetramer.

The enzyme catalyses carboxy-S-adenosyl-L-methionine + 5-hydroxyuridine(34) in tRNA = 5-carboxymethoxyuridine(34) in tRNA + S-adenosyl-L-homocysteine + H(+). Functionally, catalyzes carboxymethyl transfer from carboxy-S-adenosyl-L-methionine (Cx-SAM) to 5-hydroxyuridine (ho5U) to form 5-carboxymethoxyuridine (cmo5U) at position 34 in tRNAs. The chain is tRNA U34 carboxymethyltransferase from Histophilus somni (strain 129Pt) (Haemophilus somnus).